Consider the following 461-residue polypeptide: Photosystem II CP43 reaction center protein (461 aa).

Positions 1–2 are excised as a propeptide; sequence ME. Position 3 is an N-acetylthreonine (T3). The residue at position 3 (T3) is a Phosphothreonine. 5 helical membrane-spanning segments follow: residues 57–81, 122–143, 166–188, 243–263, and 279–300; these read LFEV…PHLA, LLGP…KDRN, KASY…RKIT, KPFA…LSYS, and WFNN…ASQA. E355 contacts [CaMn4O5] cluster. Residues 435–459 traverse the membrane as a helical segment; sequence RARAAAAGFEKGIDRDFEPVLSMTP.

It belongs to the PsbB/PsbC family. PsbC subfamily. In terms of assembly, PSII is composed of 1 copy each of membrane proteins PsbA, PsbB, PsbC, PsbD, PsbE, PsbF, PsbH, PsbI, PsbJ, PsbK, PsbL, PsbM, PsbT, PsbX, PsbY, PsbZ, Psb30/Ycf12, at least 3 peripheral proteins of the oxygen-evolving complex and a large number of cofactors. It forms dimeric complexes. Requires Binds multiple chlorophylls and provides some of the ligands for the Ca-4Mn-5O cluster of the oxygen-evolving complex. It may also provide a ligand for a Cl- that is required for oxygen evolution. PSII binds additional chlorophylls, carotenoids and specific lipids. as cofactor.

Its subcellular location is the plastid. It is found in the chloroplast thylakoid membrane. One of the components of the core complex of photosystem II (PSII). It binds chlorophyll and helps catalyze the primary light-induced photochemical processes of PSII. PSII is a light-driven water:plastoquinone oxidoreductase, using light energy to abstract electrons from H(2)O, generating O(2) and a proton gradient subsequently used for ATP formation. The chain is Photosystem II CP43 reaction center protein from Lotus japonicus (Lotus corniculatus var. japonicus).